The sequence spans 89 residues: Protein YxiC (89 aa).

The chain is Protein YxiC (yxiC) from Bacillus subtilis (strain 168).